The following is a 752-amino-acid chain: Zinc finger BED domain-containing protein RICESLEEPER 3 (752 aa).

A BED-type zinc finger spans residues 106 to 166; that stretch reads RKKSVVWEHF…ASCPMLKNED (61 aa). Residues cysteine 129, cysteine 132, histidine 153, and cysteine 159 each coordinate Zn(2+). Residues 647-733 form an HATC (Hobo-Ac-Tam3) domain region; the sequence is ELEQYLEEAL…EALFCAKDWL (87 aa).

In terms of assembly, homodimer.

The protein resides in the nucleus. Transposase-like protein that is essential for plant growth and development. May regulate global gene expression by recruiting other cellular factors. In Oryza sativa subsp. japonica (Rice), this protein is Zinc finger BED domain-containing protein RICESLEEPER 3.